A 259-amino-acid polypeptide reads, in one-letter code: Diphthine synthase (259 aa).

Residues Leu-9, Asp-85, Val-88, 113–114 (TA), Leu-168, Ala-209, and His-234 contribute to the S-adenosyl-L-methionine site.

The protein belongs to the diphthine synthase family. Homodimer.

The catalysed reaction is 2-[(3S)-amino-3-carboxypropyl]-L-histidyl-[translation elongation factor 2] + 3 S-adenosyl-L-methionine = diphthine-[translation elongation factor 2] + 3 S-adenosyl-L-homocysteine + 3 H(+). Its pathway is protein modification; peptidyl-diphthamide biosynthesis. Functionally, S-adenosyl-L-methionine-dependent methyltransferase that catalyzes the trimethylation of the amino group of the modified target histidine residue in translation elongation factor 2 (EF-2), to form an intermediate called diphthine. The three successive methylation reactions represent the second step of diphthamide biosynthesis. In Haloarcula marismortui (strain ATCC 43049 / DSM 3752 / JCM 8966 / VKM B-1809) (Halobacterium marismortui), this protein is Diphthine synthase.